The primary structure comprises 470 residues: Hydroxymethylglutaryl-CoA synthase (470 aa).

Catalysis depends on Glu100, which acts as the Proton donor/acceptor. Cys134 (acyl-thioester intermediate) is an active-site residue. 7 residues coordinate (3S)-3-hydroxy-3-methylglutaryl-CoA: Cys134, Thr176, Ser225, His269, Lys278, Asn348, and Ser382. His269 functions as the Proton donor/acceptor in the catalytic mechanism.

The protein belongs to the thiolase-like superfamily. HMG-CoA synthase family.

The enzyme catalyses acetoacetyl-CoA + acetyl-CoA + H2O = (3S)-3-hydroxy-3-methylglutaryl-CoA + CoA + H(+). It functions in the pathway metabolic intermediate biosynthesis; (R)-mevalonate biosynthesis; (R)-mevalonate from acetyl-CoA: step 2/3. In terms of biological role, hydroxymethylglutaryl-CoA synthase; part of the first module of ergosterol biosynthesis pathway that includes the early steps of the pathway, conserved across all eukaryotes, and which results in the formation of mevalonate from acetyl-coenzyme A (acetyl-CoA). This module also plays a key role in the biosynthesis of triterpenes such as ganoderic acids (GA), a group of highly oxygenated lanostane-type triterpenoids which are well recognized as a main group of unique bioactive compounds in the medicinal mushroom Ganoderma lucidum. In this module, the acetyl-CoA acetyltransferase catalyzes the formation of acetoacetyl-CoA. The hydroxymethylglutaryl-CoA synthase HMGS then condenses acetyl-CoA with acetoacetyl-CoA to form HMG-CoA. The rate-limiting step of the early module is the reduction to mevalonate by the 3-hydroxy-3-methylglutaryl-coenzyme A (HMG-CoA) reductase. The protein is Hydroxymethylglutaryl-CoA synthase of Ganoderma lucidum (Ling zhi medicinal fungus).